Reading from the N-terminus, the 178-residue chain is Large ribosomal subunit protein uL6 (178 aa).

It belongs to the universal ribosomal protein uL6 family. In terms of assembly, part of the 50S ribosomal subunit.

Its function is as follows. This protein binds to the 23S rRNA, and is important in its secondary structure. It is located near the subunit interface in the base of the L7/L12 stalk, and near the tRNA binding site of the peptidyltransferase center. The polypeptide is Large ribosomal subunit protein uL6 (Frankia casuarinae (strain DSM 45818 / CECT 9043 / HFP020203 / CcI3)).